Reading from the N-terminus, the 449-residue chain is Sulfite exporter TauE/SafE family protein 5 (449 aa).

12 helical membrane-spanning segments follow: residues 1 to 21 (MKTL…NANQ), 57 to 77 (AIIM…AGGI), 78 to 98 (GGGG…LKTA), 101 to 121 (FSAF…LFGG), 127 to 147 (YDLA…GVIC), 150 to 170 (VLPE…SSLK), 224 to 244 (IPWT…VIYL), 259 to 279 (PCGV…LIFT), 315 to 335 (AMSF…GMLI), 353 to 373 (TSFM…LLGM), 378 to 398 (TAYV…VLVQ), and 409 to 429 (IIVF…TSFG).

It belongs to the 4-toluene sulfonate uptake permease (TSUP) (TC 2.A.102) family.

Its subcellular location is the membrane. This chain is Sulfite exporter TauE/SafE family protein 5, found in Arabidopsis thaliana (Mouse-ear cress).